The sequence spans 1776 residues: Non-structural replication polyprotein (1776 aa).

The region spanning 58 to 219 is the Alphavirus-like MT domain; the sequence is SGFGCNPHPH…DQPLDAISWL (162 aa). Positions 546–582 are enriched in pro residues; the sequence is IALPPPIFRVPPPLPAQETPSPPAPALVPPTQPPQPQ. Disordered regions lie at residues 546 to 583 and 595 to 615; these read IALP…QPQP and LNAS…PSPI. Positions 658 to 812 constitute a Peptidase C21 domain; it reads PFPSSDLLSD…KLAAAAPGSN (155 aa). Catalysis depends on for protease activity residues C711 and H797. The (+)RNA virus helicase ATP-binding domain occupies 866–1026; that stretch reads SGPSNKSPKM…RLSKYIDCYC (161 aa). 899–906 is an ATP binding site; it reads GFPGCGKS. A (+)RNA virus helicase C-terminal domain is found at 1027 to 1159; that stretch reads WWTYRCPKAV…LPVDMMSAFP (133 aa). The RdRp catalytic domain maps to 1497 to 1603; sequence DAYICNDYTS…CGHPPINPNW (107 aa).

This sequence belongs to the Tymoviridae non-structural replication polyprotein family. Post-translationally, specific enzymatic cleavages by the host yield mature proteins.

The catalysed reaction is RNA(n) + a ribonucleoside 5'-triphosphate = RNA(n+1) + diphosphate. In terms of biological role, acts as a cysteine protease, methyltransferase and deubiquitinase. The cysteine protease activity cleaves the polyprotein giving rise to mature proteins. The methyltransferase domain is probably involved in viral RNA capping. Its function is as follows. RNA-directed RNA polymerase is responsible for the replication and transcription of the genome. The polypeptide is Non-structural replication polyprotein (Ononis yellow mosaic virus).